Consider the following 365-residue polypeptide: DNA replication and repair protein RecF (365 aa).

Residue 30–37 (GDNGEGKT) coordinates ATP.

This sequence belongs to the RecF family.

The protein localises to the cytoplasm. In terms of biological role, the RecF protein is involved in DNA metabolism; it is required for DNA replication and normal SOS inducibility. RecF binds preferentially to single-stranded, linear DNA. It also seems to bind ATP. The sequence is that of DNA replication and repair protein RecF from Leptospira borgpetersenii serovar Hardjo-bovis (strain JB197).